The primary structure comprises 1220 residues: Limbin (1220 aa).

A signal peptide spans 1–29 (MGATGPTGAGGRATWVLAGNILAAALVLG). At 30-210 (SGPRALPPSF…VLPNHGLHAA (181 aa)) the chain is on the extracellular side. A disordered region spans residues 38–59 (SFPALGPGSPSRPGPAGPWASS). N-linked (GlcNAc...) asparagine glycosylation is found at Asn100, Asn109, and Asn130. The chain crosses the membrane as a helical span at residues 211–231 (GFIAAFLISLLLTVAALFFLA). Residues 232 to 1220 (RGRCLQGGML…KKANRALGLD (989 aa)) lie on the Cytoplasmic side of the membrane. 4 coiled-coil regions span residues 355 to 404 (EEYE…SAAE), 563 to 644 (KQKL…AALD), 854 to 875 (GELLQERVQRLEAQEAHFAESL), and 920 to 1005 (QILE…VREE).

Component of the EvC complex composed of EFCAB7, IQCE, EVC2 and EVC; built from two subcomplexes, EVC2:EVC and EFCAB7:IQCE. Interacts with EVC. Interacts (via N-terminal end) with EFCAB7. Interacts (via N-terminal end) with IQCE. In terms of tissue distribution, expressed in long and cranial bones, kidney and heart. Strongly expressed in proliferating chondrocytes, osteoblasts and osteoclasts.

The protein resides in the cell membrane. The protein localises to the cytoplasm. Its subcellular location is the cytoskeleton. It is found in the cilium basal body. It localises to the cell projection. The protein resides in the cilium. The protein localises to the cilium membrane. Its subcellular location is the nucleus. In terms of biological role, component of the EvC complex that positively regulates ciliary Hedgehog (Hh) signaling. Plays a critical role in bone formation and skeletal development. May be involved in early embryonic morphogenesis. This is Limbin (Evc2) from Mus musculus (Mouse).